Reading from the N-terminus, the 371-residue chain is Putative glutamate--cysteine ligase 2 (371 aa).

This sequence belongs to the glutamate--cysteine ligase type 2 family. YbdK subfamily.

It catalyses the reaction L-cysteine + L-glutamate + ATP = gamma-L-glutamyl-L-cysteine + ADP + phosphate + H(+). Its function is as follows. ATP-dependent carboxylate-amine ligase which exhibits weak glutamate--cysteine ligase activity. The polypeptide is Putative glutamate--cysteine ligase 2 (Paraburkholderia xenovorans (strain LB400)).